A 667-amino-acid polypeptide reads, in one-letter code: mRNA cap guanine-N(7) methyltransferase (667 aa).

Residues 1 to 19 (MYDPARDSWEERDGDEARS) show a composition bias toward basic and acidic residues. The tract at residues 1 to 272 (MYDPARDSWE…RRRQEERERA (272 aa)) is disordered. Polar residues predominate over residues 33-52 (FSSSEQIYGASGENNNTTDL). Over residues 72 to 87 (SPPAQSTTQTPPSIST) the composition is skewed to low complexity. Polar residues predominate over residues 88–128 (HVQSPVNPAAQEASNTQSLTSAAQNQSNKSTTTMDNTSGSA). Over residues 132 to 142 (PRADPSDKSNR) the composition is skewed to basic and acidic residues. Polar residues predominate over residues 147–156 (ASPTDQNGSQ). Over residues 256 to 272 (LVDRETLRRRQEERERA) the composition is skewed to basic and acidic residues. Residues 309–667 (SKIKGLRSFN…FYHAFCFYKV (359 aa)) enclose the mRNA cap 0 methyltransferase domain. Position 318 to 319 (318 to 319 (NN)) interacts with mRNA. Residues K322, G365, D389, D427, 470–472 (MFT), and Y475 each bind S-adenosyl-L-methionine. Residues 521–535 (KKERQSQAKKEKTDE) show a composition bias toward basic and acidic residues. The tract at residues 521–547 (KKERQSQAKKEKTDEAPEDGEVEEDDG) is disordered. Positions 536 to 547 (APEDGEVEEDDG) are enriched in acidic residues.

Belongs to the class I-like SAM-binding methyltransferase superfamily. mRNA cap 0 methyltransferase family.

It is found in the nucleus. It catalyses the reaction a 5'-end (5'-triphosphoguanosine)-ribonucleoside in mRNA + S-adenosyl-L-methionine = a 5'-end (N(7)-methyl 5'-triphosphoguanosine)-ribonucleoside in mRNA + S-adenosyl-L-homocysteine. Functionally, responsible for methylating the 5'-cap structure of mRNAs. This is mRNA cap guanine-N(7) methyltransferase (abd1) from Neosartorya fischeri (strain ATCC 1020 / DSM 3700 / CBS 544.65 / FGSC A1164 / JCM 1740 / NRRL 181 / WB 181) (Aspergillus fischerianus).